The primary structure comprises 554 residues: Valerianol synthase TPS8 (554 aa).

The DDXXD motif signature appears at 288–292 (QHSVG). Positions 307, 311, 452, 456, and 460 each coordinate Mg(2+).

It belongs to the terpene synthase family. The cofactor is Mg(2+).

The enzyme catalyses (2E,6E)-farnesyl diphosphate + H2O = valerianol + diphosphate. It functions in the pathway secondary metabolite biosynthesis; terpenoid biosynthesis. In terms of biological role, terpene synthase that catalyzes the biosynthesis of the terpene valerianol. The polypeptide is Valerianol synthase TPS8 (Camellia sinensis (Tea plant)).